The sequence spans 368 residues: Peptide chain release factor 2 (368 aa).

Gln-251 is modified (N5-methylglutamine).

It belongs to the prokaryotic/mitochondrial release factor family. In terms of processing, methylated by PrmC. Methylation increases the termination efficiency of RF2.

It localises to the cytoplasm. In terms of biological role, peptide chain release factor 2 directs the termination of translation in response to the peptide chain termination codons UGA and UAA. In Streptomyces avermitilis (strain ATCC 31267 / DSM 46492 / JCM 5070 / NBRC 14893 / NCIMB 12804 / NRRL 8165 / MA-4680), this protein is Peptide chain release factor 2.